A 319-amino-acid polypeptide reads, in one-letter code: MNERKYAILGTGALGGYYGAKLQKAGSDVHFLLKSDYEKVNQDGLLVESKDGDFTLPQVNAYNDVAKMPKCDVVVVALKTTQNHLLPKLLPPIVKNDGIVLVLQNGLGVEEEIAEILPQVHIIGGLCFLCSNKVGAGYIHHLDYGQITLGEYAHGYSNMGITDRMQQISHDFQTAGISIELLEDLLLGRWKKLVWNIPYNGLSVVLNARTDELMADTYTRTLVEQLMYEVKAGAKSMGRNIPDSFIQTMLDYTVKMKPYRTSMKIDYDECRPLEVEAIVGNPLHKAQEVGVNLPQINCLYHQLKFLDGRNRTGQLTVDS.

Residues 10–15 and Asn105 contribute to the NADP(+) site; that span reads GTGALG. Asn105 lines the substrate pocket. Lys192 acts as the Proton donor in catalysis. Residues Asn196, Asn200, and Ser262 each contribute to the substrate site. An NADP(+)-binding site is contributed by Glu274.

This sequence belongs to the ketopantoate reductase family.

Its subcellular location is the cytoplasm. The catalysed reaction is (R)-pantoate + NADP(+) = 2-dehydropantoate + NADPH + H(+). It functions in the pathway cofactor biosynthesis; (R)-pantothenate biosynthesis; (R)-pantoate from 3-methyl-2-oxobutanoate: step 2/2. Its function is as follows. Catalyzes the NADPH-dependent reduction of ketopantoate into pantoic acid. The chain is 2-dehydropantoate 2-reductase from Nostoc sp. (strain PCC 7120 / SAG 25.82 / UTEX 2576).